Consider the following 1246-residue polypeptide: Superkiller complex protein 2 (1246 aa).

The segment at 220-246 is disordered; the sequence is LGGGDEDENEAVGQPGGPRGDTVSASP. Residues Ser-245 and Ser-256 each carry the phosphoserine modification. The 157-residue stretch at 319-475 folds into the Helicase ATP-binding domain; it reads ILHLERHDSV…WIGRLKRRQI (157 aa). Residue 332–339 participates in ATP binding; sequence AHTSAGKT. Residues 423–426 carry the DEVH box motif; it reads DEVH. The region spanning 585–755 is the Helicase C-terminal domain; it reads GLTSLDLTTS…LTYTMILNLL (171 aa).

Belongs to the helicase family. SKI2 subfamily. As to quaternary structure, component of the SKI complex which consists of SKIC2, SKIC3 and SKIC8. Interacts with HBS1L isoform 2.

The protein resides in the nucleus. Its subcellular location is the cytoplasm. The enzyme catalyses ATP + H2O = ADP + phosphate + H(+). Helicase component of the SKI complex, a multiprotein complex that assists the RNA-degrading exosome during the mRNA decay and quality-control pathways. The SKI complex catalyzes mRNA extraction from 80S ribosomal complexes in the 3'-5' direction and channels mRNA to the cytosolic exosome for degradation. SKI-mediated extraction of mRNA from stalled ribosomes allow binding of the Pelota-HBS1L complex and subsequent ribosome disassembly by ABCE1 for ribosome recycling. In the nucleus, the SKI complex associates with transcriptionally active genes in a manner dependent on PAF1 complex (PAF1C). The chain is Superkiller complex protein 2 from Homo sapiens (Human).